The chain runs to 34 residues: NU-buthitoxin-Ptr1a (34 aa).

3 disulfide bridges follow: C6–C27, C12–C32, and C16–C34.

Expressed by the venom gland.

It localises to the secreted. Toxin that acts as an agonist on melanocortin receptors (MC1R, MC3R, MC5R, MC5R). After binding to MC1R, the peptide activates the hMC1R/Gs pathway, but after binding to MC4R, it is not able to activate or antagonize the MC4R/Gs pathway. Inhibits melanocyte stimulating hormone (MSH)-binding to human receptors (Ki=2.9 uM to MC1R, Ki=3.9 uM to MC3R, Ki=2.6 uM to MC4R, Ki=2.2 uM to MC5R). This toxin is structurally unrelated to the natural agonists. The polypeptide is NU-buthitoxin-Ptr1a (Parabuthus transvaalicus (Transvaal thick-tailed scorpion)).